The primary structure comprises 591 residues: Autotransporter adhesin NhhA (591 aa).

An N-terminal signal peptide occupies residues 1–51 (MNKIYRIIWNSALNAWVVVSELTRNHTKRASATVKTAVLATLLFATVQASA). The surface exposed passenger domain stretch occupies residues 52 to 503 (NNEEQEEDLY…TNVAQLKGVA (452 aa)). Residues 504 to 591 (QNLNNRIDNV…GASASVGYQW (88 aa)) are translocator domain. A run of 4 beta stranded transmembrane segments spans residues 537–547 (GKSMMAIGGGT), 551–561 (EAGYAIGYSSI), 570–576 (KGTASGN), and 580–591 (HFGASASVGYQW).

It belongs to the autotransporter-2 (AT-2) (TC 1.B.40) family. In terms of assembly, homotrimer.

Its subcellular location is the cell surface. It is found in the cell outer membrane. Its function is as follows. Involved in adhesion of capsulated meningococci to host epithelial cells. Interacts with laminin and heparan sulfate, promoting the adherence to the extracellular matrix (ECM) components. The chain is Autotransporter adhesin NhhA from Neisseria meningitidis serogroup B (strain ATCC BAA-335 / MC58).